Reading from the N-terminus, the 397-residue chain is Phosphoglycerate kinase (397 aa).

Residues 26 to 28 (DLN), Arg42, 65 to 68 (HLGR), Arg119, and Arg152 each bind substrate. ATP contacts are provided by residues Lys203, Glu325, and 351–354 (GGDT).

Belongs to the phosphoglycerate kinase family. Monomer.

Its subcellular location is the cytoplasm. It carries out the reaction (2R)-3-phosphoglycerate + ATP = (2R)-3-phospho-glyceroyl phosphate + ADP. It participates in carbohydrate degradation; glycolysis; pyruvate from D-glyceraldehyde 3-phosphate: step 2/5. The protein is Phosphoglycerate kinase of Bordetella bronchiseptica (strain ATCC BAA-588 / NCTC 13252 / RB50) (Alcaligenes bronchisepticus).